The primary structure comprises 335 residues: Holliday junction branch migration complex subunit RuvB (335 aa).

The large ATPase domain (RuvB-L) stretch occupies residues 1 to 183; it reads MDERIISSET…FGVIDHLEFY (183 aa). ATP is bound by residues Leu22, Arg23, Gly64, Lys67, Thr68, Thr69, 130-132, Arg173, Tyr183, and Arg220; that span reads EDY. Residue Thr68 participates in Mg(2+) binding. The interval 184–254 is small ATPAse domain (RuvB-S); that stretch reads TEEQLTEIVL…LAKEALTLLQ (71 aa). The interval 257–335 is head domain (RuvB-H); that stretch reads PRGLDTIDQK…HLGISYEKEV (79 aa). DNA contacts are provided by Arg293, Arg312, and Arg317.

This sequence belongs to the RuvB family. In terms of assembly, homohexamer. Forms an RuvA(8)-RuvB(12)-Holliday junction (HJ) complex. HJ DNA is sandwiched between 2 RuvA tetramers; dsDNA enters through RuvA and exits via RuvB. An RuvB hexamer assembles on each DNA strand where it exits the tetramer. Each RuvB hexamer is contacted by two RuvA subunits (via domain III) on 2 adjacent RuvB subunits; this complex drives branch migration. In the full resolvosome a probable DNA-RuvA(4)-RuvB(12)-RuvC(2) complex forms which resolves the HJ.

The protein resides in the cytoplasm. It catalyses the reaction ATP + H2O = ADP + phosphate + H(+). In terms of biological role, the RuvA-RuvB-RuvC complex processes Holliday junction (HJ) DNA during genetic recombination and DNA repair, while the RuvA-RuvB complex plays an important role in the rescue of blocked DNA replication forks via replication fork reversal (RFR). RuvA specifically binds to HJ cruciform DNA, conferring on it an open structure. The RuvB hexamer acts as an ATP-dependent pump, pulling dsDNA into and through the RuvAB complex. RuvB forms 2 homohexamers on either side of HJ DNA bound by 1 or 2 RuvA tetramers; 4 subunits per hexamer contact DNA at a time. Coordinated motions by a converter formed by DNA-disengaged RuvB subunits stimulates ATP hydrolysis and nucleotide exchange. Immobilization of the converter enables RuvB to convert the ATP-contained energy into a lever motion, pulling 2 nucleotides of DNA out of the RuvA tetramer per ATP hydrolyzed, thus driving DNA branch migration. The RuvB motors rotate together with the DNA substrate, which together with the progressing nucleotide cycle form the mechanistic basis for DNA recombination by continuous HJ branch migration. Branch migration allows RuvC to scan DNA until it finds its consensus sequence, where it cleaves and resolves cruciform DNA. In Listeria monocytogenes serotype 4b (strain CLIP80459), this protein is Holliday junction branch migration complex subunit RuvB.